Reading from the N-terminus, the 325-residue chain is MSLISIRIRSKTGVENIKLESQLKLKELQNIIEEKTKISTDTQKILYGFPPKALDLSNQDAVISGFLANGDTITIENVSSISSNPGVDSVTNDKVTSSTNSFDRNIKSQPFISQEEEEDGGYATRRVTDDDNSCLFSAVAYVLEDKNRLKGYSLRALIAQNVKSDPFEYNEAVLGKSNEGYCNWIQNPKNWGGAIELSILSNHYKVEIAAFDISTQLMYCYGEDRKYTERVYLIYDGIHYDALSICLTKNGPEDFDITRFSVDDKDSLAKMKVLIEKEFKAGKFTDTAKFSLICLNCNKTLKGEKEAAIHASTTGHGNFTEYKKR.

Positions 7 to 86 (RIRSKTGVEN…NVSSISSNPG (80 aa)) are UBX-like. Positions 123 to 246 (ATRRVTDDDN…GIHYDALSIC (124 aa)) constitute an OTU domain. Positions 128 to 134 (TDDDNSC) are cys-loop. The active site involves Asp131. The active-site Nucleophile is the Cys134. The segment at 185 to 195 (IQNPKNWGGAI) is variable-loop. The tract at residues 235-239 (YDGIH) is his-loop. Ile238 is a binding site for substrate. Residue His239 is part of the active site. The tract at residues 265-270 (KDSLAK) is S2 site. The C2H2-type zinc finger occupies 292 to 316 (LICLNCNKTLKGEKEAAIHASTTGH). Residue His316 is part of the active site.

Its subcellular location is the cytoplasm. The enzyme catalyses Thiol-dependent hydrolysis of ester, thioester, amide, peptide and isopeptide bonds formed by the C-terminal Gly of ubiquitin (a 76-residue protein attached to proteins as an intracellular targeting signal).. Its function is as follows. Hydrolase that can remove conjugated ubiquitin from proteins and may therefore play an important regulatory role at the level of protein turnover by preventing degradation. The sequence is that of Ubiquitin thioesterase OTU1 (yod1) from Dictyostelium discoideum (Social amoeba).